A 177-amino-acid chain; its full sequence is MSRVGKLPIAIPEGVKIGLNDLEVKISGPKGELSKTFKGNIAISLAENKLLVKPLAANKNVRAMWGTARSIISNMVTGVKEGFKLKLEINGVGYRAMVKGKYLNLMLAKSHNTKIEIPSDIKIEMPKQNIIILEGTDKEKLGQFASIIIKQRPPEPYKGKGIKFENQFIPRKEGKKN.

It belongs to the universal ribosomal protein uL6 family. In terms of assembly, part of the 50S ribosomal subunit.

This protein binds to the 23S rRNA, and is important in its secondary structure. It is located near the subunit interface in the base of the L7/L12 stalk, and near the tRNA binding site of the peptidyltransferase center. The protein is Large ribosomal subunit protein uL6 of Rickettsia peacockii (strain Rustic).